Consider the following 497-residue polypeptide: MTGTSNIPTHGKEHKDAPALLPLPAPNTHHTHAAHPGDPSHDRHPSRGKLFIKTHGCQMNEYDSAKMADVLTTTEALELTDNPEEADIILINTCSIREKAQEKVFSQLGRWRALKTNGRDVIIGVGGCVASQEGETIVKRAPYVDLVFGPQTLHRLPDMIRARREQNRPQVDISFPEIEKFDHLPTPRAEGPSAFVSIMEGCSKYCSFCVVPYTRGEEVSRPFEDVLTEIAHLATQGVREINLLGQNVNAYRGAMDPGPSNNTNPAPPPYADLGLLIRAIAQFESIGRIRFTTSHPLEFSDSLVEAYRDVPQLANHLHLPVQSGSDRILSAMKRGYTALEFKSKIRKLRAVRPDISISSDFIIGFPGESDTDFQKTMQLIKDIGFDQSFSFIYSRRPGTPASNLEDHTPDEIKRTRLEHLQKHINAYAADISKRMIGTVQTVLVEGPSKKNPNELTGKTENMRPVNFPGHPRLIGQFIDVHITEALTNSLRGRVHTN.

The segment at 1–48 (MTGTSNIPTHGKEHKDAPALLPLPAPNTHHTHAAHPGDPSHDRHPSRG) is disordered. The span at 18–28 (PALLPLPAPNT) shows a compositional bias: low complexity. One can recognise an MTTase N-terminal domain in the interval 48-165 (GKLFIKTHGC…LPDMIRARRE (118 aa)). Residues Cys-57, Cys-94, Cys-128, Cys-202, Cys-206, and Cys-209 each contribute to the [4Fe-4S] cluster site. Residues 188-430 (RAEGPSAFVS…QKHINAYAAD (243 aa)) enclose the Radical SAM core domain. Positions 433–496 (KRMIGTVQTV…TNSLRGRVHT (64 aa)) constitute a TRAM domain.

This sequence belongs to the methylthiotransferase family. MiaB subfamily. As to quaternary structure, monomer. It depends on [4Fe-4S] cluster as a cofactor.

It localises to the cytoplasm. The catalysed reaction is N(6)-dimethylallyladenosine(37) in tRNA + (sulfur carrier)-SH + AH2 + 2 S-adenosyl-L-methionine = 2-methylsulfanyl-N(6)-dimethylallyladenosine(37) in tRNA + (sulfur carrier)-H + 5'-deoxyadenosine + L-methionine + A + S-adenosyl-L-homocysteine + 2 H(+). Functionally, catalyzes the methylthiolation of N6-(dimethylallyl)adenosine (i(6)A), leading to the formation of 2-methylthio-N6-(dimethylallyl)adenosine (ms(2)i(6)A) at position 37 in tRNAs that read codons beginning with uridine. The sequence is that of tRNA-2-methylthio-N(6)-dimethylallyladenosine synthase from Xylella fastidiosa (strain M23).